The following is a 230-amino-acid chain: Orotidine 5'-phosphate decarboxylase (230 aa).

Residues Asp-10, Lys-32, 59–68 (DLKYHDIPNT), Thr-119, Arg-180, Gln-189, Gly-209, and Arg-210 contribute to the substrate site. The active-site Proton donor is Lys-61.

It belongs to the OMP decarboxylase family. Type 1 subfamily. Homodimer.

It catalyses the reaction orotidine 5'-phosphate + H(+) = UMP + CO2. It functions in the pathway pyrimidine metabolism; UMP biosynthesis via de novo pathway; UMP from orotate: step 2/2. Its function is as follows. Catalyzes the decarboxylation of orotidine 5'-monophosphate (OMP) to uridine 5'-monophosphate (UMP). This chain is Orotidine 5'-phosphate decarboxylase, found in Haemophilus ducreyi (strain 35000HP / ATCC 700724).